The following is a 507-amino-acid chain: Histidine ammonia-lyase (507 aa).

The segment at residues S143–G145 is a cross-link (5-imidazolinone (Ser-Gly)). S144 is modified (2,3-didehydroalanine (Ser)).

Belongs to the PAL/histidase family. In terms of processing, contains an active site 4-methylidene-imidazol-5-one (MIO), which is formed autocatalytically by cyclization and dehydration of residues Ser-Ser-Gly.

The protein resides in the cytoplasm. The catalysed reaction is L-histidine = trans-urocanate + NH4(+). The protein operates within amino-acid degradation; L-histidine degradation into L-glutamate; N-formimidoyl-L-glutamate from L-histidine: step 1/3. This Alkaliphilus metalliredigens (strain QYMF) protein is Histidine ammonia-lyase.